We begin with the raw amino-acid sequence, 391 residues long: Elongation factor Tu 1 (391 aa).

Residues 10-201 enclose the tr-type G domain; the sequence is KPHVNIGTIG…AVDSYIPTPE (192 aa). The interval 19 to 26 is G1; it reads GHVDHGKT. A GTP-binding site is contributed by 19 to 26; that stretch reads GHVDHGKT. Mg(2+) is bound at residue Thr26. The interval 55-59 is G2; that stretch reads GITIS. The segment at 76-79 is G3; the sequence is DCPG. Residues 76 to 80 and 131 to 134 each bind GTP; these read DCPGH and NKVD. The G4 stretch occupies residues 131 to 134; that stretch reads NKVD. Residues 169-171 are G5; the sequence is SAL.

The protein belongs to the TRAFAC class translation factor GTPase superfamily. Classic translation factor GTPase family. EF-Tu/EF-1A subfamily. In terms of assembly, monomer.

It localises to the cytoplasm. The catalysed reaction is GTP + H2O = GDP + phosphate + H(+). Its function is as follows. GTP hydrolase that promotes the GTP-dependent binding of aminoacyl-tRNA to the A-site of ribosomes during protein biosynthesis. The sequence is that of Elongation factor Tu 1 from Rhizobium etli (strain ATCC 51251 / DSM 11541 / JCM 21823 / NBRC 15573 / CFN 42).